The chain runs to 918 residues: Isoleucine--tRNA ligase (918 aa).

The 'HIGH' region motif lies at 57–67 (PYANGHIHIGT). Position 552 (E552) interacts with L-isoleucyl-5'-AMP. The short motif at 593-597 (KMSKS) is the 'KMSKS' region element. Position 596 (K596) interacts with ATP. 4 residues coordinate Zn(2+): C886, C889, C906, and C909.

Belongs to the class-I aminoacyl-tRNA synthetase family. IleS type 1 subfamily. In terms of assembly, monomer. Requires Zn(2+) as cofactor.

Its subcellular location is the cytoplasm. It catalyses the reaction tRNA(Ile) + L-isoleucine + ATP = L-isoleucyl-tRNA(Ile) + AMP + diphosphate. In terms of biological role, catalyzes the attachment of isoleucine to tRNA(Ile). As IleRS can inadvertently accommodate and process structurally similar amino acids such as valine, to avoid such errors it has two additional distinct tRNA(Ile)-dependent editing activities. One activity is designated as 'pretransfer' editing and involves the hydrolysis of activated Val-AMP. The other activity is designated 'posttransfer' editing and involves deacylation of mischarged Val-tRNA(Ile). The polypeptide is Isoleucine--tRNA ligase (Thermotoga neapolitana (strain ATCC 49049 / DSM 4359 / NBRC 107923 / NS-E)).